Reading from the N-terminus, the 469-residue chain is Protein POLLENLESS 3-LIKE 1 (469 aa).

Positions 1–20 (MRRRESRGAKGGGFLTPPPS) are disordered. TPR repeat units follow at residues 88–121 (DSAL…CPFE), 124–157 (DSID…LEQD), and 184–217 (ARIL…EPDN). Residues 139 to 191 (RITEVAELLEHKLRTLEQDKHYGGRIKIAKRSHEEQNNKTIEQEKARILGNLA) are a coiled coil. A compositionally biased stretch (polar residues) spans 314-338 (NIHKTNSHASSESVEQNSPGLTTQP). The segment at 314-339 (NIHKTNSHASSESVEQNSPGLTTQPR) is disordered.

The protein belongs to the MS5 protein family. As to expression, expressed in floral and vegetative organs. Also barely detectable in leaves and stems.

It is found in the nucleus. In terms of biological role, probably involved in the regulation of cell division. This Arabidopsis thaliana (Mouse-ear cress) protein is Protein POLLENLESS 3-LIKE 1.